The chain runs to 508 residues: Protein adenylyltransferase Fic (508 aa).

The chain crosses the membrane as a helical span at residues 48 to 70 (FYRFALFFIAGSFAAFSFHALTS). 2 TPR repeats span residues 132-165 (ALGALRLAQDMHLSGKDDKASRLFEHALALAPKH) and 166-200 (PEVLLRYGEFLEHNQRNIVLADQYYFQALTLCPSN). The Inhibitory (S/T)XXXE(G/N) motif motif lies at 257–262 (SVGIEG). ATP-binding positions include glutamate 261 and 342–345 (VGGH). One can recognise a Fido domain in the interval 311-446 (ITIKDILELH…IRPFVRFIAD (136 aa)). The active site involves histidine 389. Residues 393-400 (DGNGRTSR), 425-426 (YY), and asparagine 433 each bind ATP.

The protein belongs to the fic family. Homodimer.

It is found in the membrane. The enzyme catalyses L-tyrosyl-[protein] + ATP = O-(5'-adenylyl)-L-tyrosyl-[protein] + diphosphate. It catalyses the reaction L-threonyl-[protein] + ATP = 3-O-(5'-adenylyl)-L-threonyl-[protein] + diphosphate. It carries out the reaction 3-O-(5'-adenylyl)-L-threonyl-[protein] + H2O = L-threonyl-[protein] + AMP + H(+). Its activity is regulated as follows. The side chain of Glu-261 determines which of the two opposing activities (AMPylase or de-AMPylase) will take place. In response to endoplasmic reticulum stress, mediates de-AMPylase activity. Adenylyltransferase activity is inhibited by the inhibitory helix present at the N-terminus: Glu-261 binds ATP and competes with ATP-binding at Arg-400, thereby preventing adenylyltransferase activity. In unstressed cells, disengagement of Glu-261 promotes adenylyltransferase activity. Activation dissociates ATP-binding from Glu-261, allowing ordered binding of the entire ATP moiety with the alpha-phosphate in an orientation that is productive for accepting an incoming target hydroxyl side chain. Its function is as follows. Protein that can both mediate the addition of adenosine 5'-monophosphate (AMP) to specific residues of target proteins (AMPylation), and the removal of the same modification from target proteins (de-AMPylation), depending on the context. The side chain of Glu-261 determines which of the two opposing activities (AMPylase or de-AMPylase) will take place. Acts as a key regulator of the unfolded protein response (UPR) by mediating AMPylation or de-AMPylation of Hsc70-3/BiP. In unstressed cells, acts as an adenylyltransferase by mediating AMPylation of Hsc70-3/BiP at 'Thr-518', thereby inactivating it. In response to endoplasmic reticulum stress, acts as a phosphodiesterase by mediating removal of ATP (de-AMPylation) from Hsc70-3/BiP at 'Thr-518', leading to restore HSPA5/BiP activity. This chain is Protein adenylyltransferase Fic, found in Drosophila persimilis (Fruit fly).